The chain runs to 239 residues: Putative ABC transporter ATP-binding protein BR1368/BS1330_I1363 (239 aa).

An ABC transporter domain is found at 5–234 (LSLDRVSVSR…EQVHLHYVEA (230 aa)). 37 to 44 (GDNGVGKT) contacts ATP.

It belongs to the ABC transporter superfamily.

It localises to the cell inner membrane. Functionally, probably part of an ABC transporter complex. Responsible for energy coupling to the transport system. In Brucella suis biovar 1 (strain 1330), this protein is Putative ABC transporter ATP-binding protein BR1368/BS1330_I1363.